Consider the following 245-residue polypeptide: uncharacterized protein (245 aa).

Basic and acidic residues predominate over residues 162–174 (KEQSDVTTSERTR). The disordered stretch occupies residues 162–183 (KEQSDVTTSERTRSPPGSSKTT).

This is an uncharacterized protein from Homo sapiens (Human).